A 171-amino-acid polypeptide reads, in one-letter code: Probable chemoreceptor glutamine deamidase CheD 1 (171 aa).

Positions Met-1–Glu-18 are enriched in low complexity. Residues Met-1–Gly-23 are disordered.

It belongs to the CheD family.

The enzyme catalyses L-glutaminyl-[protein] + H2O = L-glutamyl-[protein] + NH4(+). Probably deamidates glutamine residues to glutamate on methyl-accepting chemotaxis receptors (MCPs), playing an important role in chemotaxis. This is Probable chemoreceptor glutamine deamidase CheD 1 from Anaeromyxobacter dehalogenans (strain 2CP-C).